A 266-amino-acid polypeptide reads, in one-letter code: Diphthine synthase (266 aa).

S-adenosyl-L-methionine contacts are provided by residues Leu-9, Asp-84, Val-87, 112 to 113, Leu-169, Ala-210, and His-235; that span reads SI.

It belongs to the diphthine synthase family. As to quaternary structure, homodimer.

It catalyses the reaction 2-[(3S)-amino-3-carboxypropyl]-L-histidyl-[translation elongation factor 2] + 3 S-adenosyl-L-methionine = diphthine-[translation elongation factor 2] + 3 S-adenosyl-L-homocysteine + 3 H(+). It functions in the pathway protein modification; peptidyl-diphthamide biosynthesis. Functionally, S-adenosyl-L-methionine-dependent methyltransferase that catalyzes the trimethylation of the amino group of the modified target histidine residue in translation elongation factor 2 (EF-2), to form an intermediate called diphthine. The three successive methylation reactions represent the second step of diphthamide biosynthesis. This chain is Diphthine synthase, found in Methanosarcina mazei (strain ATCC BAA-159 / DSM 3647 / Goe1 / Go1 / JCM 11833 / OCM 88) (Methanosarcina frisia).